We begin with the raw amino-acid sequence, 345 residues long: Nuclear hormone receptor family nhr-176 (345 aa).

Positions 7 to 82 (IQPCLVCGQS…AGMLEKMVFS (76 aa)) form a DNA-binding region, nuclear receptor. Residues 10-30 (CLVCGQSSNSILFGAPSCRAC) form an NR C4-type zinc finger. The segment at 46 to 65 (NNCLGECSFAKKSMKPCQSC) adopts an NR C4-type; degenerate zinc-finger fold. The region spanning 92–342 (FEKSILEELE…CPLYAISTNS (251 aa)) is the NR LBD domain. An AF-2 region spans residues 331-342 (SGCPLYAISTNS).

The protein resides in the nucleus. Functionally, nuclear hormone receptor. Binds to xenobiotic ligand thiabendazole (TBZ), in vitro. Involved in the up-regulation of phase I detoxification genes, such as probable cytochrome P450 cyp-35d1, in response to TBZ. The sequence is that of Nuclear hormone receptor family nhr-176 from Caenorhabditis elegans.